Here is a 356-residue protein sequence, read N- to C-terminus: Protein-glutamate methylesterase/protein-glutamine glutaminase 2 (356 aa).

The region spanning 7–124 is the Response regulatory domain; that stretch reads KVLCVDDSAL…RDGLMEYTDT (118 aa). D58 is subject to 4-aspartylphosphate. In terms of domain architecture, CheB-type methylesterase spans 157–349; sequence LLSTEKLIIL…QRVMARLATY (193 aa). Residues S169, H195, and D291 contribute to the active site.

This sequence belongs to the CheB family. Post-translationally, phosphorylated by CheA. Phosphorylation of the N-terminal regulatory domain activates the methylesterase activity.

The protein localises to the cytoplasm. It catalyses the reaction [protein]-L-glutamate 5-O-methyl ester + H2O = L-glutamyl-[protein] + methanol + H(+). It carries out the reaction L-glutaminyl-[protein] + H2O = L-glutamyl-[protein] + NH4(+). Its function is as follows. Involved in chemotaxis. Part of a chemotaxis signal transduction system that modulates chemotaxis in response to various stimuli. Catalyzes the demethylation of specific methylglutamate residues introduced into the chemoreceptors (methyl-accepting chemotaxis proteins or MCP) by CheR. Also mediates the irreversible deamidation of specific glutamine residues to glutamic acid. The protein is Protein-glutamate methylesterase/protein-glutamine glutaminase 2 of Cupriavidus pinatubonensis (strain JMP 134 / LMG 1197) (Cupriavidus necator (strain JMP 134)).